The following is a 116-amino-acid chain: Aspartate 1-decarboxylase (116 aa).

The active-site Schiff-base intermediate with substrate; via pyruvic acid is the serine 25. Serine 25 is modified (pyruvic acid (Ser)). Residue threonine 57 participates in substrate binding. Tyrosine 58 (proton donor) is an active-site residue. 73 to 75 serves as a coordination point for substrate; it reads GAA.

The protein belongs to the PanD family. In terms of assembly, heterooctamer of four alpha and four beta subunits. Pyruvate serves as cofactor. Is synthesized initially as an inactive proenzyme, which is activated by self-cleavage at a specific serine bond to produce a beta-subunit with a hydroxyl group at its C-terminus and an alpha-subunit with a pyruvoyl group at its N-terminus.

It localises to the cytoplasm. It catalyses the reaction L-aspartate + H(+) = beta-alanine + CO2. The protein operates within cofactor biosynthesis; (R)-pantothenate biosynthesis; beta-alanine from L-aspartate: step 1/1. Functionally, catalyzes the pyruvoyl-dependent decarboxylation of aspartate to produce beta-alanine. This is Aspartate 1-decarboxylase from Fervidobacterium nodosum (strain ATCC 35602 / DSM 5306 / Rt17-B1).